Here is a 270-residue protein sequence, read N- to C-terminus: 3-methyl-2-oxobutanoate hydroxymethyltransferase (270 aa).

The Mg(2+) site is built by Asp41 and Asp80. Residues 41–42, Asp80, and Lys109 each bind 3-methyl-2-oxobutanoate; that span reads DS. Glu111 is a binding site for Mg(2+). Catalysis depends on Glu178, which acts as the Proton acceptor.

Belongs to the PanB family. As to quaternary structure, homodecamer; pentamer of dimers. Requires Mg(2+) as cofactor.

Its subcellular location is the cytoplasm. The catalysed reaction is 3-methyl-2-oxobutanoate + (6R)-5,10-methylene-5,6,7,8-tetrahydrofolate + H2O = 2-dehydropantoate + (6S)-5,6,7,8-tetrahydrofolate. It participates in cofactor biosynthesis; (R)-pantothenate biosynthesis; (R)-pantoate from 3-methyl-2-oxobutanoate: step 1/2. Its function is as follows. Catalyzes the reversible reaction in which hydroxymethyl group from 5,10-methylenetetrahydrofolate is transferred onto alpha-ketoisovalerate to form ketopantoate. This chain is 3-methyl-2-oxobutanoate hydroxymethyltransferase, found in Thermotoga sp. (strain RQ2).